Consider the following 409-residue polypeptide: FADH(2)-dependent resorcinol hydroxylase, oxygenase component (409 aa).

The protein belongs to the HpaH/HsaA monooxygenase family. The FADH(2)-dependent resorcinol hydroxylase is composed of two subunits, GraA (the oxygenase component) and GraD (the reductase component). Both subunits are required for activity.

It carries out the reaction resorcinol + FADH2 + O2 = benzene-1,2,4-triol + FAD + H2O + H(+). It participates in aromatic compound metabolism. Its function is as follows. Involved in the gamma-resorcylate (2,6-dihydroxybenzoate) catabolism. Oxygenase component of the resorcinol hydroxylase, which catalyzes the FADH(2)-dependent conversion of resorcinol to hydroxyquinol. This chain is FADH(2)-dependent resorcinol hydroxylase, oxygenase component, found in Rhizobium sp. (strain MTP-10005).